A 364-amino-acid polypeptide reads, in one-letter code: Peptide chain release factor 1 (364 aa).

An N5-methylglutamine modification is found at Gln237.

The protein belongs to the prokaryotic/mitochondrial release factor family. Post-translationally, methylated by PrmC. Methylation increases the termination efficiency of RF1.

Its subcellular location is the cytoplasm. Peptide chain release factor 1 directs the termination of translation in response to the peptide chain termination codons UAG and UAA. This is Peptide chain release factor 1 from Rubrobacter xylanophilus (strain DSM 9941 / JCM 11954 / NBRC 16129 / PRD-1).